The primary structure comprises 2562 residues: Zinc finger homeobox protein 2 (2562 aa).

The span at 1–13 shows a compositional bias: polar residues; that stretch reads MATLNSASPSGTV. Disordered regions lie at residues 1 to 88 and 337 to 410; these read MATL…PPKD and PSPP…DPPP. Residues 56–73 show a composition bias toward basic and acidic residues; that stretch reads GGERLESGSDLDPPKEIG. 2 consecutive C2H2-type zinc fingers follow at residues 446 to 469 and 501 to 525; these read LKCP…REKH and YRCD…SDKH. Disordered regions lie at residues 530-559, 603-651, and 669-705; these read QGFQ…EPKT, PPGL…PDKP, and RKFP…PSPD. Positions 609–622 are enriched in pro residues; it reads PGPPPPPGAAPTNP. A compositionally biased stretch (polar residues) spans 690-704; sequence LLGSSSDGLPTSPSP. C2H2-type zinc fingers lie at residues 752 to 776, 815 to 839, and 864 to 888; these read HRCK…TDKH, LRCN…GSAH, and YHCL…TPAH. Positions 923–966 are disordered; it reads RLQTPGKASDTPLAQPPTSEKDAQNKTEQQASEVTEDRSGPPRD. The C2H2-type 6 zinc-finger motif lies at 1003-1026; it reads YRCPLCQEQLVGRPALHFHLSHLH. Disordered regions lie at residues 1058 to 1126 and 1140 to 1166; these read NPVE…PAPR and MSEE…HPLT. 2 stretches are compositionally biased toward pro residues: residues 1091–1101 and 1114–1124; these read SPDPPLEPPLA and DQPPSPAPSPA. 2 consecutive C2H2-type zinc fingers follow at residues 1185-1211 and 1242-1266; these read YKCT…SHLH and FKCT…SVLH. Basic and acidic residues predominate over residues 1278 to 1305; it reads RAEGAERGQEEFKEGETEGEAGTEKKGP. Residues 1278–1313 are disordered; the sequence is RAEGAERGQEEFKEGETEGEAGTEKKGPDPGGFMSG. Residues 1474–1497 form a C2H2-type 9 zinc finger; sequence LACGACGKLFSNMLILKTHEEHVH. Positions 1520–1584 are disordered; sequence LYPPPVEPPK…EGSRGSLPPA (65 aa). The segment covering 1521 to 1531 has biased composition (pro residues); that stretch reads YPPPVEPPKPP. The homeobox 1 DNA-binding region spans 1589-1648; the sequence is RRFSRTKFTEFQTQALQSFFETSAYPKDGEVERLASLLGLASRVVVVWFQNARQKARKNA. The C2H2-type 10; degenerate zinc finger occupies 1664–1687; the sequence is SGCRRCHATFACVFELVRHLKKCY. The disordered stretch occupies residues 1689-1760; that stretch reads DQPPEEEEEA…EGKAPPSPPV (72 aa). Residues 1690 to 1713 show a composition bias toward acidic residues; sequence QPPEEEEEAERGEEEEEVEEEEAE. A compositionally biased stretch (basic and acidic residues) spans 1743-1752; that stretch reads TRPESKESEG. A C2H2-type 11 zinc finger spans residues 1761–1783; sequence YACDQCAASFPSQDLLTTHHRLH. Disordered stretches follow at residues 1814–1853, 1907–1934, 1971–2057, 2114–2136, 2186–2210, 2263–2313, and 2391–2429; these read SGTS…KDKR, RKGQ…PAPF, PLPF…DSMG, KKAK…TSAA, PAPE…PLGA, QTAG…PNSS, and LQQP…LTGS. Residues 1851–1910 constitute a DNA-binding region (homeobox 2); sequence DKRLRTTILPEQLEILYRWYMQDSNPTRKMLDCISEEVGLKKRVVQVWFQNTRARERKGQ. Over residues 1985 to 1996 the composition is skewed to pro residues; it reads TPEPPPPLPPPA. Over residues 2008-2037 the composition is skewed to low complexity; it reads KASPESEACSPSAGDLSDSSASSLAEPESP. A compositionally biased stretch (gly residues) spans 2038-2051; that stretch reads GAGGTSGGPGGGTG. A DNA-binding region (homeobox 3) is located at residues 2058–2117; that stretch reads QRRYRTQMSSLQLKIMKACYEAYRTPTMQECEVLGEEIGLPKRVIQVWFQNARAKEKKAK. Residues 2188–2200 show a composition bias toward pro residues; the sequence is PETPLAPKGPPAT. Polar residues predominate over residues 2275–2286; it reads PVSNQTNSSTDP. The span at 2295-2305 shows a compositional bias: basic and acidic residues; that stretch reads SGDKVSGERKP. Residues 2395 to 2411 show a composition bias toward pro residues; that stretch reads PQAPEPTATAPPKPPEL. A C2H2-type 12; degenerate zinc finger spans residues 2441-2461; that stretch reads YLCRQCKMAFDGEAPATAHQR. The segment at 2485 to 2509 adopts a C2H2-type 13 zinc-finger fold; it reads YHCLACEVLLSGREALASHLRSSAH. Disordered regions lie at residues 2506 to 2525 and 2540 to 2562; these read SSAH…ITVT and EEAR…LLAL. A compositionally biased stretch (low complexity) spans 2553–2562; that stretch reads TTTTSTLLAL.

Expressed in brain (at protein level). Expressed at the highest levels in the pyramidal cell layer of the hippocampus, the suprachiasmatic nucleus, laterodorsal thalamic nucleus, lateral geniculate nucleus, substantia nigra pars compacta, and magnocellular part of the red nucleus (at protein level). Highly expressed in dorsal root ganglia. Expressed at lower levels in kidney, stomach, liver, heart and testis.

It localises to the nucleus. Transcriptional regulator that is critical for the regulation of pain perception and processing of noxious stimuli. The protein is Zinc finger homeobox protein 2 of Mus musculus (Mouse).